Reading from the N-terminus, the 374-residue chain is UDP-N-acetylglucosamine--N-acetylmuramyl-(pentapeptide) pyrophosphoryl-undecaprenol N-acetylglucosamine transferase (374 aa).

Residues 14-16 (TGG), N125, R168, S196, and Q297 contribute to the UDP-N-acetyl-alpha-D-glucosamine site.

The protein belongs to the glycosyltransferase 28 family. MurG subfamily.

Its subcellular location is the cell inner membrane. The catalysed reaction is di-trans,octa-cis-undecaprenyl diphospho-N-acetyl-alpha-D-muramoyl-L-alanyl-D-glutamyl-meso-2,6-diaminopimeloyl-D-alanyl-D-alanine + UDP-N-acetyl-alpha-D-glucosamine = di-trans,octa-cis-undecaprenyl diphospho-[N-acetyl-alpha-D-glucosaminyl-(1-&gt;4)]-N-acetyl-alpha-D-muramoyl-L-alanyl-D-glutamyl-meso-2,6-diaminopimeloyl-D-alanyl-D-alanine + UDP + H(+). The protein operates within cell wall biogenesis; peptidoglycan biosynthesis. Functionally, cell wall formation. Catalyzes the transfer of a GlcNAc subunit on undecaprenyl-pyrophosphoryl-MurNAc-pentapeptide (lipid intermediate I) to form undecaprenyl-pyrophosphoryl-MurNAc-(pentapeptide)GlcNAc (lipid intermediate II). The sequence is that of UDP-N-acetylglucosamine--N-acetylmuramyl-(pentapeptide) pyrophosphoryl-undecaprenol N-acetylglucosamine transferase from Rhodopseudomonas palustris (strain BisA53).